Reading from the N-terminus, the 198-residue chain is Superoxide dismutase [Fe] (198 aa).

The Fe cation site is built by His-27, His-74, Asp-157, and His-161.

It belongs to the iron/manganese superoxide dismutase family. As to quaternary structure, homodimer. It depends on Fe cation as a cofactor.

The catalysed reaction is 2 superoxide + 2 H(+) = H2O2 + O2. Destroys superoxide anion radicals which are normally produced within the cells and which are toxic to biological systems. The protein is Superoxide dismutase [Fe] (sodB) of Pseudomonas putida (strain ATCC 47054 / DSM 6125 / CFBP 8728 / NCIMB 11950 / KT2440).